Reading from the N-terminus, the 295-residue chain is Dehydrodolichyl diphosphate synthase 6 (295 aa).

This sequence belongs to the UPP synthase family. Mg(2+) is required as a cofactor.

It participates in protein modification; protein glycosylation. Functionally, catalyzes cis-prenyl chain elongation to produce the polyprenyl backbone of dolichol, a glycosyl carrier-lipid required for the biosynthesis of several classes of glycoprotein. This Arabidopsis thaliana (Mouse-ear cress) protein is Dehydrodolichyl diphosphate synthase 6.